Consider the following 317-residue polypeptide: CXXC-type zinc finger protein 5 (317 aa).

Over residues 1–49 the composition is skewed to low complexity; it reads MSSLSSGPQDTGGSSSSSSNGSSGSGPKAGVADKSAAVAAAAPASVADD. Residues 1 to 96 form a disordered region; sequence MSSLSSGPQD…GSGGGSMMGG (96 aa). The span at 83–94 shows a compositional bias: gly residues; that stretch reads GGSGGSGGGSMM. The CXXC-type zinc finger occupies 251 to 292; that stretch reads GKKKRKRCGMCAPCRRRINCEQCSSCRNRKTGHQICKFRKCE. The short motif at 252-257 is the Nuclear localization signal element; that stretch reads KKKRKR. Zn(2+)-binding residues include Cys-258, Cys-261, Cys-264, Cys-270, Cys-273, Cys-276, Cys-286, and Cys-291.

As to quaternary structure, interacts with DVL1. Interacts with RBPJ.

It localises to the nucleus. The protein localises to the cytoplasm. May indirectly participate in activation of the NF-kappa-B and MAPK pathways. Acts as a mediator of BMP4-mediated modulation of canonical Wnt signaling activity in neural stem cells. Required for DNA damage-induced ATM phosphorylation, p53 activation and cell cycle arrest. Involved in myelopoiesis. Binds to the oxygen responsive element of COX4I2 and represses its transcription under hypoxia conditions (4% oxygen), as well as normoxia conditions (20% oxygen). May repress COX4I2 transactivation induced by CHCHD2 and RBPJ. Binds preferentially to DNA containing cytidine-phosphate-guanosine (CpG) dinucleotides over CpH (H=A, T, and C), hemimethylated-CpG and hemimethylated-hydroxymethyl-CpG. This chain is CXXC-type zinc finger protein 5 (CXXC5), found in Bos taurus (Bovine).